We begin with the raw amino-acid sequence, 335 residues long: UPF0353 protein MT1528 (335 aa).

A run of 2 helical transmembrane segments spans residues 18-38 and 67-87; these read WFFLFLFVVAGLVALYILMQL and VPAILLVLSLLLFTIAMAGPT. The VWFA domain occupies 98 to 294; sequence VVMLVIDVSQ…AELRAVYSSL (197 aa). A helical transmembrane segment spans residues 309-329; sequence VGWLRLGALALALAALAALLI.

The protein belongs to the UPF0353 family.

Its subcellular location is the cell membrane. This Mycobacterium tuberculosis (strain CDC 1551 / Oshkosh) protein is UPF0353 protein MT1528.